The sequence spans 409 residues: MSESIDRVFVKAIGTIRTLSSRTGYGGLPRPPIENRVKLYGLYKQATEGDVAGVMERPLGDSPEAEAAKRKWDAWRSEQGTSKTEAKRQYISYLIDTMKQFASDTTEARELLSELEYLWNQISDVSPNDSSDSESNAGPAQLLQNHAQLLSRDISVVDDPITSSGMDPMYNPSFQRHNSSRFINASTAERLNSLSNYYSNLNPTPPLSSRRYQGSVTPRNVDFIKWQNDINNSINKLNHDLQLLANRRLQSSASDPLYSKRGSDLTHDDFVNDISSSSSNRRFRARRNQPLVSKVLLGTISLLLKLIKTVIKHVAIDAVIIAVLVAVIKRSIIIPNLISNEISLQKIHHSELESNSSIKGDSNGGRLTIVLPFINGKDFFQENSLLGKLLKVFHDYVDHVSRIRLIKRN.

Topologically, residues 1-313 are cytoplasmic; sequence MSESIDRVFV…LKLIKTVIKH (313 aa). The region spanning 5–103 is the ACB domain; the sequence is IDRVFVKAIG…LIDTMKQFAS (99 aa). Residues 314–334 traverse the membrane as a helical segment; it reads VAIDAVIIAVLVAVIKRSIII. Residues 335-409 lie on the Peroxisomal side of the membrane; the sequence is PNLISNEISL…VSRIRLIKRN (75 aa).

The protein belongs to the ATG37 family. Interacts with ATG30 and PEX3. In terms of processing, phosphorylated.

The protein resides in the peroxisome membrane. Functionally, acyl-CoA binding protein which acts as the peroxisome receptor for pexophagy. Required for both micropexophagy and macropexophagy, but not for the cytoplasm to vacuole transport (Cvt) or autophagy pathways. Required for functional micropexophagic apparatus (MIPA) and relocation of ATG11 to the peroxisome-sequestering arms of the vacuole. Binds palmitoyl-CoA but not oleyl-CoA. This is Autophagy-related protein 37 from Komagataella phaffii (strain GS115 / ATCC 20864) (Yeast).